Here is a 301-residue protein sequence, read N- to C-terminus: Probable alpha-L-glutamate ligase 1 (301 aa).

Residues 104–287 enclose the ATP-grasp domain; that stretch reads LQLLSRKGIG…VTEPIVEYIE (184 aa). Residues lysine 141, 178-179, aspartate 187, and 211-213 contribute to the ATP site; these read EY and RSN. 3 residues coordinate Mg(2+): aspartate 248, glutamate 260, and asparagine 262. Residues aspartate 248, glutamate 260, and asparagine 262 each contribute to the Mn(2+) site.

Belongs to the RimK family. Mg(2+) serves as cofactor. Mn(2+) is required as a cofactor.

This chain is Probable alpha-L-glutamate ligase 1, found in Shewanella oneidensis (strain ATCC 700550 / JCM 31522 / CIP 106686 / LMG 19005 / NCIMB 14063 / MR-1).